We begin with the raw amino-acid sequence, 116 residues long: Large ribosomal subunit protein bL17 (116 aa).

It belongs to the bacterial ribosomal protein bL17 family. In terms of assembly, part of the 50S ribosomal subunit. Contacts protein L32.

The polypeptide is Large ribosomal subunit protein bL17 (Parasynechococcus marenigrum (strain WH8102)).